A 1040-amino-acid polypeptide reads, in one-letter code: Multidrug resistance protein MdtB (1040 aa).

12 helical membrane passes run 16-36 (FIMR…AGII), 347-367 (LMMA…NIPA), 369-389 (IIPG…MVFL), 396-416 (LTLM…IVVI), 440-460 (IGFT…PLLF), 472-492 (FAIT…TLTP), 537-557 (WLTL…WVFI), 863-883 (LGST…VLGI), 888-908 (FIHP…ALLA), 911-931 (IAGS…IGIV), 968-988 (ILMT…STGV), and 998-1018 (IGMV…TPVI).

The protein belongs to the resistance-nodulation-cell division (RND) (TC 2.A.6) family. MdtB subfamily. As to quaternary structure, part of a tripartite efflux system composed of MdtA, MdtB and MdtC. MdtB forms a heteromultimer with MdtC.

It localises to the cell inner membrane. The MdtABC tripartite complex confers resistance against novobiocin and deoxycholate. This chain is Multidrug resistance protein MdtB, found in Escherichia coli O139:H28 (strain E24377A / ETEC).